We begin with the raw amino-acid sequence, 359 residues long: Probable dual-specificity RNA methyltransferase RlmN (359 aa).

Residue E91 is the Proton acceptor of the active site. The 233-residue stretch at 97 to 329 folds into the Radical SAM core domain; it reads QHYGHSVCVT…KKNGVNCVVR (233 aa). C104 and C340 are oxidised to a cystine. 3 residues coordinate [4Fe-4S] cluster: C111, C115, and C118. Residues 163-164, S195, 218-220, and N296 contribute to the S-adenosyl-L-methionine site; these read GE and SLH. The active-site S-methylcysteine intermediate is the C340.

Belongs to the radical SAM superfamily. RlmN family. [4Fe-4S] cluster serves as cofactor.

The protein localises to the cytoplasm. The catalysed reaction is adenosine(2503) in 23S rRNA + 2 reduced [2Fe-2S]-[ferredoxin] + 2 S-adenosyl-L-methionine = 2-methyladenosine(2503) in 23S rRNA + 5'-deoxyadenosine + L-methionine + 2 oxidized [2Fe-2S]-[ferredoxin] + S-adenosyl-L-homocysteine. The enzyme catalyses adenosine(37) in tRNA + 2 reduced [2Fe-2S]-[ferredoxin] + 2 S-adenosyl-L-methionine = 2-methyladenosine(37) in tRNA + 5'-deoxyadenosine + L-methionine + 2 oxidized [2Fe-2S]-[ferredoxin] + S-adenosyl-L-homocysteine. In terms of biological role, specifically methylates position 2 of adenine 2503 in 23S rRNA and position 2 of adenine 37 in tRNAs. The chain is Probable dual-specificity RNA methyltransferase RlmN from Streptococcus pyogenes serotype M2 (strain MGAS10270).